Consider the following 62-residue polypeptide: Prokaryotic ubiquitin-like protein Pup (62 aa).

Positions 1–29 (MSQQSLNAPGPGAEDGNDPEAVTGGQTFA) are disordered. Positions 21-56 (AVTGGQTFASAQAADDLLDEIDSVLESNAETFVRSF) are ARC ATPase binding. Deamidated glutamine is present on Q62. Q62 is covalently cross-linked (Isoglutamyl lysine isopeptide (Gln-Lys) (interchain with K-? in acceptor proteins)).

The protein belongs to the prokaryotic ubiquitin-like protein family. Strongly interacts with the proteasome-associated ATPase ARC through a hydrophobic interface; the interacting region of Pup lies in its C-terminal half. There is one Pup binding site per ARC hexamer ring. Post-translationally, is modified by deamidation of its C-terminal glutamine to glutamate by the deamidase Dop, a prerequisite to the subsequent pupylation process.

It functions in the pathway protein degradation; proteasomal Pup-dependent pathway. In terms of biological role, protein modifier that is covalently attached to lysine residues of substrate proteins, thereby targeting them for proteasomal degradation. The tagging system is termed pupylation. This is Prokaryotic ubiquitin-like protein Pup from Brachybacterium faecium (strain ATCC 43885 / DSM 4810 / JCM 11609 / LMG 19847 / NBRC 14762 / NCIMB 9860 / 6-10).